We begin with the raw amino-acid sequence, 365 residues long: Prostaglandin E2 receptor EP3 subtype (365 aa).

Over 1–30 (MAGVWAPEHSVEAHSNQSSAADGCGSVSVA) the chain is Extracellular. Residue Asn-16 is glycosylated (N-linked (GlcNAc...) asparagine). Residues 31–55 (FPITMMVTGFVGNALAMLLVVRSYR) form a helical membrane-spanning segment. Residues 56 to 68 (RRESKRKKSFLLC) lie on the Cytoplasmic side of the membrane. A helical transmembrane segment spans residues 69–89 (IGWLALTDLVGQLLTSPVVIL). The Extracellular portion of the chain corresponds to 90–108 (VYLSQRRWEQLDPSGRLCT). Cys-107 and Cys-184 form a disulfide bridge. Residues 109–130 (FFGLTMTVFGLSSLLVASAMAV) form a helical membrane-spanning segment. The Cytoplasmic portion of the chain corresponds to 131–151 (ERALAIRAPHWYASHMKTRAT). Residues 152–173 (PVLLGVWLSVLAFALLPVLGVG) form a helical membrane-spanning segment. Residues 174-203 (RYSVQWPGTWCFISTGPAGNETDSAREPGS) lie on the Extracellular side of the membrane. Asn-193 carries an N-linked (GlcNAc...) asparagine glycan. A helical transmembrane segment spans residues 204–229 (VAFASAFACLGLLALVVTFACNLATI). Over 230–259 (KALVSRCRAKAAASQSSAQWGRITTETAIQ) the chain is Cytoplasmic. Residues 260 to 283 (LMGIMCVLSVCWSPLLIMMLKMIF) traverse the membrane as a helical segment. The Extracellular segment spans residues 284–303 (NQMSVEQCKTQMGKEKECNS). Residues 304 to 325 (FLIAVRLASLNQILDPWVYLLL) form a helical membrane-spanning segment. Residues 326-365 (RKILLRKFCQIRDHTNYASSSTSLPCPGSSVLMWSDQLER) lie on the Cytoplasmic side of the membrane.

It belongs to the G-protein coupled receptor 1 family. Interacts (via C-terminus) with MKLN1. In terms of assembly, does not interact with MKLN1. In terms of tissue distribution, principally expressed in the tubules of the renal medulla. Specific expression is seen in medullary and cortical thick ascending limbs; lower levels are detected in cortical and inner medullary collecting ducts. Not detected significantly in the glomeruli. In the brain, expressed in all types of glial cells.

The protein resides in the cell membrane. Functionally, receptor for prostaglandin E2 (PGE2). Required for normal development of fever in response to pyrinogens, including IL1B, prostaglandin E2 and bacterial lipopolysaccharide (LPS). Required for normal potentiation of platelet aggregation by prostaglandin E2, and thus plays a role in the regulation of blood coagulation. Required for increased HCO3(-) secretion in the duodenum in response to mucosal acidification, and thereby contributes to the protection of the mucosa against acid-induced ulceration. Not required for normal kidney function, normal urine volume and osmolality. Its function is as follows. Receptor for prostaglandin E2 (PGE2); ligand binding activates a signaling cascade via G(i) proteins that leads to the inhibition of adenylate cyclase. In terms of biological role, receptor for prostaglandin E2 (PGE2); ligand binding can activate several distinct signaling cascades, resulting in activation or inhibition of adenylate cyclase. This chain is Prostaglandin E2 receptor EP3 subtype (Ptger3), found in Rattus norvegicus (Rat).